We begin with the raw amino-acid sequence, 149 residues long: Calmodulin (149 aa).

Residue Ala-2 is modified to N-acetylalanine. EF-hand domains are found at residues Glu-8 to Asn-43, Pro-44 to Asp-79, Asp-81 to Lys-116, and Leu-117 to Lys-149. Residues Asp-21, Asp-23, Asp-25, Cys-27, Glu-32, Asp-57, Asp-59, Asn-61, Thr-63, Glu-68, Asp-94, Asp-96, Asn-98, and Glu-105 each coordinate Ca(2+). The residue at position 116 (Lys-116) is an N6,N6,N6-trimethyllysine. 5 residues coordinate Ca(2+): Asp-130, Asp-132, Asp-134, Gln-136, and Glu-141.

Belongs to the calmodulin family.

Calmodulin mediates the control of a large number of enzymes, ion channels and other proteins by Ca(2+). Among the enzymes to be stimulated by the calmodulin-Ca(2+) complex are a number of protein kinases and phosphatases. In Zea mays (Maize), this protein is Calmodulin (CALM1).